The sequence spans 270 residues: Putative ABC transporter ATP-binding protein MG304 (270 aa).

An ABC transporter domain is found at 1-232 (MLQVKNLSFK…LDLFHNHHFN (232 aa)). 36–43 (GHNGSGKS) contributes to the ATP binding site.

Belongs to the ABC transporter superfamily.

The protein is Putative ABC transporter ATP-binding protein MG304 of Mycoplasma genitalium (strain ATCC 33530 / DSM 19775 / NCTC 10195 / G37) (Mycoplasmoides genitalium).